Reading from the N-terminus, the 231-residue chain is Beta-casein (231 aa).

A signal peptide spans 1–15 (MKVFILACLVALALA). S24 is modified (phosphoserine). Position 27 is a phosphothreonine (T27). Phosphoserine is present on residues S29, S31, and S32.

Belongs to the beta-casein family. Mammary gland specific. Secreted in milk.

Its subcellular location is the secreted. In terms of biological role, important role in determination of the surface properties of the casein micelles. The protein is Beta-casein (Csn2) of Rattus norvegicus (Rat).